A 346-amino-acid chain; its full sequence is Histidinol-phosphate aminotransferase (346 aa).

Lysine 209 carries the N6-(pyridoxal phosphate)lysine modification.

This sequence belongs to the class-II pyridoxal-phosphate-dependent aminotransferase family. Histidinol-phosphate aminotransferase subfamily. Homodimer. Pyridoxal 5'-phosphate serves as cofactor.

It carries out the reaction L-histidinol phosphate + 2-oxoglutarate = 3-(imidazol-4-yl)-2-oxopropyl phosphate + L-glutamate. Its pathway is amino-acid biosynthesis; L-histidine biosynthesis; L-histidine from 5-phospho-alpha-D-ribose 1-diphosphate: step 7/9. This Aliivibrio fischeri (strain ATCC 700601 / ES114) (Vibrio fischeri) protein is Histidinol-phosphate aminotransferase.